The chain runs to 96 residues: MQAKRTILLLLLLGMVALSSCGLREKHVQGLVNKFVPAGIVKNLLQAGIHKVAKMQYGCPIIKDYCSFHCNDLEKHEGYCHGTKCKCNIPNQYELF.

Positions 1–21 (MQAKRTILLLLLLGMVALSSC) are cleaved as a signal peptide. Positions 22-29 (GLREKHVQ) are excised as a propeptide. The region spanning 56–93 (QYGCPIIKDYCSFHCNDLEKHEGYCHGTKCKCNIPNQY) is the BetaSPN-type CS-alpha/beta domain. 3 disulfide bridges follow: Cys-59/Cys-80, Cys-66/Cys-85, and Cys-70/Cys-87.

This sequence belongs to the long chain scorpion toxin family. Class 1 subfamily. In terms of tissue distribution, expressed by the venom gland.

Its subcellular location is the secreted. Functionally, inhibits voltage-gated potassium channel. In Lychas mucronatus (Chinese swimming scorpion), this protein is Neurotoxin beta-KTx 31.1.